The primary structure comprises 205 residues: Ephrin-A1 (205 aa).

The signal sequence occupies residues 1–17 (MEFLWAPLLGLCCSLAA). The Ephrin RBD domain occupies 18-161 (ADRHIVFWNS…THNPQAHVNP (144 aa)). The N-linked (GlcNAc...) asparagine glycan is linked to asparagine 26. Intrachain disulfides connect cysteine 51–cysteine 92 and cysteine 80–cysteine 140. A lipid anchor (GPI-anchor amidated serine) is attached at serine 182. Residues 183 to 205 (AAPRLFPLVWAVLLLPLLLLQSQ) constitute a propeptide, removed in mature form.

This sequence belongs to the ephrin family. Monomer. Homodimer. Forms heterodimers with EPHA2. Binds to the receptor tyrosine kinases EPHA2, EPHA3, EPHA4, EPHA5, EPHA6 and EPHA7. Also binds with low affinity to EPHA1. In terms of processing, undergoes proteolysis by a metalloprotease to give rise to a soluble monomeric form. N-Glycosylation is required for binding to EPHA2 receptor and inducing its internalization. In terms of tissue distribution, expressed in myogenic progenitor cells.

Its subcellular location is the cell membrane. It localises to the secreted. In terms of biological role, cell surface GPI-bound ligand for Eph receptors, a family of receptor tyrosine kinases which are crucial for migration, repulsion and adhesion during neuronal, vascular and epithelial development. Binds promiscuously Eph receptors residing on adjacent cells, leading to contact-dependent bidirectional signaling into neighboring cells. Plays an important role in angiogenesis and tumor neovascularization. The recruitment of VAV2, VAV3 and PI3-kinase p85 subunit by phosphorylated EPHA2 is critical for EFNA1-induced RAC1 GTPase activation and vascular endothelial cell migration and assembly. Exerts anti-oncogenic effects in tumor cells through activation and down-regulation of EPHA2. Activates EPHA2 by inducing tyrosine phosphorylation which leads to its internalization and degradation. Acts as a negative regulator in the tumorigenesis of gliomas by down-regulating EPHA2 and FAK. Can evoke collapse of embryonic neuronal growth cone and regulates dendritic spine morphogenesis. The sequence is that of Ephrin-A1 (Efna1) from Mus musculus (Mouse).